The chain runs to 338 residues: tRNA N6-adenosine threonylcarbamoyltransferase (338 aa).

Positions 110 and 114 each coordinate Fe cation. Substrate contacts are provided by residues Ile-132–Gly-136, Asp-165, Gly-178, and Asn-274. Residue Asp-298 coordinates Fe cation.

Belongs to the KAE1 / TsaD family. Requires Fe(2+) as cofactor.

The protein localises to the cytoplasm. The catalysed reaction is L-threonylcarbamoyladenylate + adenosine(37) in tRNA = N(6)-L-threonylcarbamoyladenosine(37) in tRNA + AMP + H(+). Its function is as follows. Required for the formation of a threonylcarbamoyl group on adenosine at position 37 (t(6)A37) in tRNAs that read codons beginning with adenine. Is involved in the transfer of the threonylcarbamoyl moiety of threonylcarbamoyl-AMP (TC-AMP) to the N6 group of A37, together with TsaE and TsaB. TsaD likely plays a direct catalytic role in this reaction. The polypeptide is tRNA N6-adenosine threonylcarbamoyltransferase (Borrelia hermsii (strain HS1 / DAH)).